A 344-amino-acid chain; its full sequence is Heat-inducible transcription repressor HrcA (344 aa).

This sequence belongs to the HrcA family.

Its function is as follows. Negative regulator of class I heat shock genes (grpE-dnaK-dnaJ and groELS operons). Prevents heat-shock induction of these operons. The polypeptide is Heat-inducible transcription repressor HrcA (Corynebacterium aurimucosum (strain ATCC 700975 / DSM 44827 / CIP 107346 / CN-1) (Corynebacterium nigricans)).